The following is a 126-amino-acid chain: Protein ApaG (126 aa).

One can recognise an ApaG domain in the interval K2–H126.

The polypeptide is Protein ApaG (Shewanella loihica (strain ATCC BAA-1088 / PV-4)).